A 277-amino-acid chain; its full sequence is 3-methyl-2-oxobutanoate hydroxymethyltransferase (277 aa).

Asp-43 and Asp-82 together coordinate Mg(2+). Residues 43-44, Asp-82, and Lys-112 each bind 3-methyl-2-oxobutanoate; that span reads DS. Glu-114 provides a ligand contact to Mg(2+). The active-site Proton acceptor is Glu-181.

The protein belongs to the PanB family. Homodecamer; pentamer of dimers. Requires Mg(2+) as cofactor.

The protein localises to the cytoplasm. The catalysed reaction is 3-methyl-2-oxobutanoate + (6R)-5,10-methylene-5,6,7,8-tetrahydrofolate + H2O = 2-dehydropantoate + (6S)-5,6,7,8-tetrahydrofolate. The protein operates within cofactor biosynthesis; (R)-pantothenate biosynthesis; (R)-pantoate from 3-methyl-2-oxobutanoate: step 1/2. Functionally, catalyzes the reversible reaction in which hydroxymethyl group from 5,10-methylenetetrahydrofolate is transferred onto alpha-ketoisovalerate to form ketopantoate. The polypeptide is 3-methyl-2-oxobutanoate hydroxymethyltransferase (Bacillus licheniformis (strain ATCC 14580 / DSM 13 / JCM 2505 / CCUG 7422 / NBRC 12200 / NCIMB 9375 / NCTC 10341 / NRRL NRS-1264 / Gibson 46)).